A 633-amino-acid polypeptide reads, in one-letter code: ATP-dependent RNA helicase mrh4, mitochondrial (633 aa).

Residues M1–M38 constitute a mitochondrion transit peptide. Residues M50 to K115 are disordered. Polar residues predominate over residues L52–Q63. A compositionally biased stretch (basic and acidic residues) spans R98–P109. Positions S142 to R175 match the Q motif motif. The Helicase ATP-binding domain occupies S195–L407. Residue A208–T215 coordinates ATP. A DEAD box motif is present at residues D354–D357. The Helicase C-terminal domain occupies F458 to I633.

This sequence belongs to the DEAD box helicase family. MRH4 subfamily.

Its subcellular location is the mitochondrion. The enzyme catalyses ATP + H2O = ADP + phosphate + H(+). In terms of biological role, ATP-binding RNA helicase involved in mitochondrial RNA metabolism. Required for maintenance of mitochondrial DNA. The chain is ATP-dependent RNA helicase mrh4, mitochondrial (mrh4) from Aspergillus niger (strain ATCC MYA-4892 / CBS 513.88 / FGSC A1513).